The following is an 83-amino-acid chain: Molybdopterin synthase sulfur carrier subunit (83 aa).

G83 carries the 1-thioglycine; alternate modification. The residue at position 83 (G83) is a Glycyl adenylate; alternate.

It belongs to the MoaD family. MOCS2A subfamily. Heterotetramer; composed of 2 small (MOCS2A) and 2 large (MOCS2B) subunits. Post-translationally, C-terminal thiocarboxylation occurs in 2 steps, it is first acyl-adenylated (-COAMP) via the hesA/moeB/thiF part of MOCS3, then thiocarboxylated (-COSH) via the rhodanese domain of MOCS3.

Its subcellular location is the cytoplasm. Its pathway is cofactor biosynthesis; molybdopterin biosynthesis. In terms of biological role, acts as a sulfur carrier required for molybdopterin biosynthesis. Component of the molybdopterin synthase complex that catalyzes the conversion of precursor Z into molybdopterin by mediating the incorporation of 2 sulfur atoms into precursor Z to generate a dithiolene group. In the complex, serves as sulfur donor by being thiocarboxylated (-COSH) at its C-terminus by MOCS3. After interaction with MOCS2B, the sulfur is then transferred to precursor Z to form molybdopterin. This Chlamydomonas reinhardtii (Chlamydomonas smithii) protein is Molybdopterin synthase sulfur carrier subunit.